The sequence spans 550 residues: Membrane protein insertase YidC (550 aa).

6 consecutive transmembrane segments (helical) span residues 6–26 (LVLF…WLKQ), 333–353 (VVDY…LSWI), 356–376 (VVGN…LMFF), 430–450 (LPIL…LGSV), 469–489 (PYFI…KLNP), and 504–524 (PVIF…YWVV).

It belongs to the OXA1/ALB3/YidC family. Type 1 subfamily. In terms of assembly, interacts with the Sec translocase complex via SecD. Specifically interacts with transmembrane segments of nascent integral membrane proteins during membrane integration.

It localises to the cell inner membrane. Functionally, required for the insertion and/or proper folding and/or complex formation of integral membrane proteins into the membrane. Involved in integration of membrane proteins that insert both dependently and independently of the Sec translocase complex, as well as at least some lipoproteins. Aids folding of multispanning membrane proteins. The polypeptide is Membrane protein insertase YidC (Aromatoleum aromaticum (strain DSM 19018 / LMG 30748 / EbN1) (Azoarcus sp. (strain EbN1))).